We begin with the raw amino-acid sequence, 404 residues long: O-antigen ligase (404 aa).

11 helical membrane passes run 16-32 (IWNK…YFLD), 39-55 (HLII…QVSR), 67-84 (SVFY…YSIL), 96-115 (FENT…PVLL), 127-147 (VLFS…ILYI), 168-183 (SMVF…WLFR), 189-221 (LVFL…GVLW), 228-246 (WKLI…ALVI), 324-343 (ILYI…VYLY), 363-379 (YNAH…FYIV), and 385-401 (QVDI…LLAL).

It belongs to the O-antigen ligase family.

The protein localises to the cell inner membrane. The enzyme catalyses a lipid-linked O antigen + a lipid A-core oligosaccharide = a lipopolysaccharide + a polyisoprenyl diphosphate.. It participates in bacterial outer membrane biogenesis; lipopolysaccharide biosynthesis. Functionally, transferase involved in the biosynthesis of the lipopolysaccharide (LPS). Catalyzes the transfer of a polymerized O-antigen molecule from its polyprenyl diphosphate membrane anchor to a terminal sugar of the lipid A-core oligosaccharide, finalizing the biosynthesis of the lipopolysaccharide. May also be involved in a feedback mechanism to regulate O-unit synthesis, based on the availability of O units on the periplasmic face of the membrane. This chain is O-antigen ligase, found in Salmonella typhimurium (strain LT2 / SGSC1412 / ATCC 700720).